Reading from the N-terminus, the 103-residue chain is Large ribosomal subunit protein uL24 (103 aa).

The protein belongs to the universal ribosomal protein uL24 family. As to quaternary structure, part of the 50S ribosomal subunit.

Functionally, one of two assembly initiator proteins, it binds directly to the 5'-end of the 23S rRNA, where it nucleates assembly of the 50S subunit. In terms of biological role, one of the proteins that surrounds the polypeptide exit tunnel on the outside of the subunit. The sequence is that of Large ribosomal subunit protein uL24 from Haemophilus influenzae (strain ATCC 51907 / DSM 11121 / KW20 / Rd).